A 596-amino-acid chain; its full sequence is Protein kinase C iota type (596 aa).

Polar residues predominate over residues 1–12 (MPTQRDSSTMSH). Residues 1 to 23 (MPTQRDSSTMSHTVAGGGSGDHS) form a disordered region. The residue at position 2 (Pro-2) is an N-acetylproline. The segment at 2–28 (PTQRDSSTMSHTVAGGGSGDHSHQVRV) is required for interaction with RAB2. The segment at 2–253 (PTQRDSSTMS…KASSSLGLQD (252 aa)) is regulatory domain. Thr-3 is modified (phosphothreonine). Ser-7 and Ser-8 each carry phosphoserine. Phosphothreonine is present on Thr-9. In terms of domain architecture, PB1 spans 25-108 (QVRVKAYYRG…SELLIHVFPC (84 aa)). The interval 72–91 (DEEGDPCTVSSQLELEEAFR) is interaction with PARD6A. The Pseudosubstrate motif lies at 125 to 134 (YRRGARRWRK). The Phorbol-ester/DAG-type zinc-finger motif lies at 140–190 (GHTFQAKRFNRRAHCAICTDRIWGLGRQGYKCINCKLLVHKKCHKLVTIEC). The disordered stretch occupies residues 221–246 (PSSHESLDQVGEEKEAMNTRESGKAS). Residues 225–243 (ESLDQVGEEKEAMNTRESG) are compositionally biased toward basic and acidic residues. One can recognise a Protein kinase domain in the interval 254 to 522 (FDLLRVIGRG…FADIQGHPFF (269 aa)). 260–268 (IGRGSYAKV) contacts ATP. Phosphotyrosine; by SRC is present on residues Tyr-265 and Tyr-280. An ATP-binding site is contributed by Lys-283. Phosphotyrosine; by SRC is present on Tyr-334. Asp-378 functions as the Proton acceptor in the catalytic mechanism. Thr-412 carries the phosphothreonine; by PDPK1 modification. The AGC-kinase C-terminal domain occupies 523 to 594 (RNVDWDMMEQ…INPLLMSAEE (72 aa)). A Phosphothreonine modification is found at Thr-564.

It belongs to the protein kinase superfamily. AGC Ser/Thr protein kinase family. PKC subfamily. Forms a complex with SQSTM1 and MP2K5. Interacts directly with SQSTM1. Interacts with IKBKB. Interacts with PARD6A, PARD6B and PARD6G. Part of a quaternary complex containing aPKC, PARD3, a PARD6 protein (PARD6A, PARD6B or PARD6G) and a GTPase protein (CDC42 or RAC1). Part of a complex with LLGL1 and PARD6B. Interacts with ADAP1/CENTA1. Interaction with SMG1, through the ZN-finger domain, activates the kinase activity. Interacts with CDK7. Forms a complex with RAB2A and GAPDH involved in recruitment onto the membrane of vesicular tubular clusters (VTCs). Interacts with ECT2 ('Thr-359' phosphorylated form). Interacts with VAMP2. Interacts with WDFY2 (via WD repeats 1-3). Post-translationally, phosphorylation at Thr-412 in the activation loop is not mandatory for activation. Upon neuronal growth factor (NGF) stimulation, phosphorylated by SRC at Tyr-265, Tyr-280 and Tyr-334. Phosphorylation at Tyr-265 facilitates binding to KPNB1/importin-beta regulating entry of PRKCI into the nucleus. Phosphorylation on Tyr-334 is important for NF-kappa-B stimulation. Phosphorylated at Thr-564 during the initial phase of long term potentiation.

It localises to the cytoplasm. Its subcellular location is the membrane. The protein resides in the endosome. The protein localises to the nucleus. It carries out the reaction L-seryl-[protein] + ATP = O-phospho-L-seryl-[protein] + ADP + H(+). It catalyses the reaction L-threonyl-[protein] + ATP = O-phospho-L-threonyl-[protein] + ADP + H(+). With respect to regulation, atypical PKCs (PRKCI and PRKCZ) exhibit an elevated basal enzymatic activity (that may be due to the interaction with SMG1 or SQSTM1) and are not regulated by diacylglycerol, phosphatidylserine, phorbol esters or calcium ions. Two specific sites, Thr-412 (activation loop of the kinase domain) and Thr-564 (turn motif), need to be phosphorylated for its full activation. Might also be a target for novel lipid activators that are elevated during nutrient-stimulated insulin secretion. Functionally, calcium- and diacylglycerol-independent serine/ threonine-protein kinase that plays a general protective role against apoptotic stimuli, is involved in NF-kappa-B activation, cell survival, differentiation and polarity, and contributes to the regulation of microtubule dynamics in the early secretory pathway. Is necessary for BCR-ABL oncogene-mediated resistance to apoptotic drug in leukemia cells, protecting leukemia cells against drug-induced apoptosis. In cultured neurons, prevents amyloid beta protein-induced apoptosis by interrupting cell death process at a very early step. In glioblastoma cells, may function downstream of phosphatidylinositol 3-kinase (PI(3)K) and PDPK1 in the promotion of cell survival by phosphorylating and inhibiting the pro-apoptotic factor BAD. Can form a protein complex in non-small cell lung cancer (NSCLC) cells with PARD6A and ECT2 and regulate ECT2 oncogenic activity by phosphorylation, which in turn promotes transformed growth and invasion. In response to nerve growth factor (NGF), acts downstream of SRC to phosphorylate and activate IRAK1, allowing the subsequent activation of NF-kappa-B and neuronal cell survival. Functions in the organization of the apical domain in epithelial cells by phosphorylating EZR. This step is crucial for activation and normal distribution of EZR at the early stages of intestinal epithelial cell differentiation. Forms a protein complex with LLGL1 and PARD6B independently of PARD3 to regulate epithelial cell polarity. Plays a role in microtubule dynamics in the early secretory pathway through interaction with RAB2A and GAPDH and recruitment to vesicular tubular clusters (VTCs). In human coronary artery endothelial cells (HCAEC), is activated by saturated fatty acids and mediates lipid-induced apoptosis. Involved in early synaptic long term potentiation phase in CA1 hippocampal cells and short term memory formation. This is Protein kinase C iota type (PRKCI) from Pongo abelii (Sumatran orangutan).